A 133-amino-acid polypeptide reads, in one-letter code: p53 and DNA damage-regulated protein 1 (133 aa).

The protein belongs to the prefoldin subunit beta family. As to quaternary structure, component of the PAQosome complex which is responsible for the biogenesis of several protein complexes and which consists of R2TP complex members RUVBL1, RUVBL2, RPAP3 and PIH1D1, URI complex members PFDN2, PFDN6, PDRG1, UXT and URI1 as well as ASDURF, POLR2E and DNAAF10/WDR92.

It is found in the cytoplasm. Its function is as follows. May play a role in chaperone-mediated protein folding. In Pongo abelii (Sumatran orangutan), this protein is p53 and DNA damage-regulated protein 1 (PDRG1).